The primary structure comprises 313 residues: MTLKVAVQMDPIARINIRGDSTFALLLEAQARGHAISYFTPDKLSLRGNDVVASVQSLKVRDQEGDHFTLGEPARVDMRSYDVVLLRQDPPFDLAYITSTHLLERIHPATLVVNNPASVRNAPEKLFVMDFTELMPPTLISRDKDEINAFRAEHGAVVMKPLHGHGGAAVFRVLPQDINFGSLYDMFAVTFREPWVIQRFLPEVKHGDKRIILVDGEFAGAVNRVPAEDDLRSNMVRGGAAAATELSPREREICATLGPKLRERGLLFVGIDVIDGYLTEINVTSPTGIRAVARLGGPDIAAKIWDVIEAKRA.

The region spanning 125 to 309 (KLFVMDFTEL…IAAKIWDVIE (185 aa)) is the ATP-grasp domain. 151–207 (RAEHGAVVMKPLHGHGGAAVFRVLPQDINFGSLYDMFAVTFREPWVIQRFLPEVKHG) lines the ATP pocket. Mg(2+) contacts are provided by Glu280 and Asn282.

It belongs to the prokaryotic GSH synthase family. Mg(2+) serves as cofactor. Mn(2+) is required as a cofactor.

It carries out the reaction gamma-L-glutamyl-L-cysteine + glycine + ATP = glutathione + ADP + phosphate + H(+). It functions in the pathway sulfur metabolism; glutathione biosynthesis; glutathione from L-cysteine and L-glutamate: step 2/2. This Rhodopseudomonas palustris (strain ATCC BAA-98 / CGA009) protein is Glutathione synthetase.